The following is a 364-amino-acid chain: Peptide chain release factor 1 (364 aa).

N5-methylglutamine is present on Q237.

The protein belongs to the prokaryotic/mitochondrial release factor family. Post-translationally, methylated by PrmC. Methylation increases the termination efficiency of RF1.

It localises to the cytoplasm. In terms of biological role, peptide chain release factor 1 directs the termination of translation in response to the peptide chain termination codons UAG and UAA. The protein is Peptide chain release factor 1 of Rubrobacter xylanophilus (strain DSM 9941 / JCM 11954 / NBRC 16129 / PRD-1).